The primary structure comprises 448 residues: Phosphohexose mutases (448 aa).

S97 functions as the Phosphoserine intermediate in the catalytic mechanism. The Mg(2+) site is built by S97, D237, D239, and D241.

Belongs to the phosphohexose mutase family. Requires Mg(2+) as cofactor.

It carries out the reaction alpha-D-glucose 1-phosphate = alpha-D-glucose 6-phosphate. The enzyme catalyses alpha-D-mannose 1-phosphate = D-mannose 6-phosphate. It participates in nucleotide-sugar biosynthesis; GDP-alpha-D-mannose biosynthesis; alpha-D-mannose 1-phosphate from D-fructose 6-phosphate: step 2/2. Functionally, involved in xanthan production. In Xanthomonas campestris pv. campestris (strain B100), this protein is Phosphohexose mutases (xanA).